A 526-amino-acid polypeptide reads, in one-letter code: Putative ankyrin repeat protein R840 (526 aa).

15 ANK repeats span residues 78–107, 108–137, 139–167, 169–197, 198–227, 229–255, 256–285, 286–315, 317–345, 346–375, 376–405, 406–435, 437–467, 468–497, and 499–526; these read TLNE…NIRS, RDNF…DIRS, KNYA…NIRD, DNCA…DSTS, NFNE…RCRN, SAII…NIRI, DDDY…NIRS, EIDH…DIKS, YDRS…NIRN, INDY…NIRV, DNDS…DIRV, NNYQ…NVSI, NVPL…DINL, ADDM…NVRA, and NDYA…AILS.

The chain is Putative ankyrin repeat protein R840 from Acanthamoeba polyphaga (Amoeba).